Here is a 410-residue protein sequence, read N- to C-terminus: Auxin-induced protein 5NG4 (410 aa).

Residues 1–16 (MASNIMQRCNVFMSER) are Cytoplasmic-facing. Residues 17 to 37 (VKLHAAMLALQFGYAGFHIVS) form a helical membrane-spanning segment. Over 38 to 47 (RAALNMGVSK) the chain is Extracellular. Residues 48–68 (VVFPVYRNILALMLIGPCAYF) traverse the membrane as a helical segment. The Cytoplasmic portion of the chain corresponds to 69–74 (LEKKER). Residues 75–95 (PALTLSFLIQFFLLALCGITG) traverse the membrane as a helical segment. Residues 96 to 109 (QSRILSLRIVLHIP) lie on the Extracellular side of the membrane. Residues 110-130 (TFASAIQNSVPAITFIMAAAL) traverse the membrane as a helical segment. The Cytoplasmic portion of the chain corresponds to 131-141 (RLEKVHISRRD). Residues 142-162 (GLAKIIGTVACVSGATIITLY) form a helical membrane-spanning segment. At 163–196 (KGPPITHIWRPNLEVTASYFKAFQGNDLSAKSEN) the chain is on the extracellular side. Asn196 carries N-linked (GlcNAc...) asparagine glycosylation. The helical transmembrane segment at 197–217 (WTLGCIYLLGNCLAWSGWIVL) threads the bilayer. One can recognise an EamA domain in the interval 209 to 338 (LAWSGWIVLQ…IIIGLYLVLW (130 aa)). Residues 218–229 (QAPVLKRYPARL) lie on the Cytoplasmic side of the membrane. Residues 230–250 (SVTSFTCFFGVIQFLIIAAFF) traverse the membrane as a helical segment. The Extracellular segment spans residues 251–264 (ETDLEHWKIHSGGE). The helical transmembrane segment at 265–285 (LFTILYAGFVASGIAFSVQIW) threads the bilayer. Topologically, residues 286–292 (CIDRGGP) are cytoplasmic. A helical transmembrane segment spans residues 293–313 (VFVAVYQPVQTIAVAIMASII). The Extracellular portion of the chain corresponds to 314-317 (LGEQ). The helical transmembrane segment at 318 to 338 (FYLGGIFGAILIIIGLYLVLW) threads the bilayer. Topologically, residues 339 to 410 (GKSEEKRLGL…IPSPSDEPQP (72 aa)) are cytoplasmic.

It belongs to the drug/metabolite transporter (DMT) superfamily. Plant drug/metabolite exporter (P-DME) (TC 2.A.7.4) family.

The protein localises to the membrane. The polypeptide is Auxin-induced protein 5NG4 (Pinus taeda (Loblolly pine)).